The chain runs to 705 residues: Probable iron-sulfur-binding oxidoreductase FadF (705 aa).

Transmembrane regions (helical) follow at residues 4 to 24, 71 to 91, 109 to 129, 146 to 166, 173 to 193, and 199 to 219; these read FLIANALLFLIVTAYAVYLFV, IIHVMFFYGFILVQFGAIDFI, AFTFFQEIVTFLILIAVGWAF, AGLVLIFIGGLMLTVLLGNGM, HGLSWSEPIASGIAFMLSGVG, and VIFYIAWWIHLLFLLSFLVYV. 4Fe-4S ferredoxin-type domains follow at residues 268–298 and 360–391; these read QSQLLDLYACVECGRCTNMCPATGTGKMLSP and GDVITEEEIWACTTCRNCEDQCPVMNEHVDKI. Positions 277, 280, 283, 287, 371, 374, 377, and 381 each coordinate [4Fe-4S] cluster.

[4Fe-4S] cluster serves as cofactor.

Its subcellular location is the cell membrane. This chain is Probable iron-sulfur-binding oxidoreductase FadF (fadF), found in Bacillus subtilis (strain 168).